Reading from the N-terminus, the 367-residue chain is tRNA (cytosine(34)-C(5))-methyltransferase, mitochondrial (367 aa).

Residues 170 to 176, Glu-193, Asp-224, and Asp-242 contribute to the S-adenosyl-L-methionine site; that span reads CAAPGGK. The active-site Nucleophile is the Cys-296.

This sequence belongs to the class I-like SAM-binding methyltransferase superfamily. RsmB/NOP family.

The protein resides in the mitochondrion matrix. The catalysed reaction is cytidine(34) in mitochondrial tRNA + S-adenosyl-L-methionine = 5-methylcytidine(34) in mitochondrial tRNA + S-adenosyl-L-homocysteine + H(+). Mitochondrial tRNA methyltransferase that mediates methylation of cytosine to 5-methylcytosine (m5C) at position 34 of mt-tRNA(Met). mt-tRNA(Met) methylation at cytosine(34) takes place at the wobble position of the anticodon and initiates the formation of 5-formylcytosine (f(5)c) at this position. mt-tRNA(Met) containing the f(5)c modification at the wobble position enables recognition of the AUA codon in addition to the AUG codon, expanding codon recognition in mitochondrial translation. The sequence is that of tRNA (cytosine(34)-C(5))-methyltransferase, mitochondrial from Danio rerio (Zebrafish).